Consider the following 303-residue polypeptide: Probable alpha-L-glutamate ligase 1 (303 aa).

In terms of domain architecture, ATP-grasp spans 104–287 (LQLLSRKGVG…IAGLIYSFIE (184 aa)). ATP contacts are provided by residues Lys141, 178–179 (EF), Asp187, and 211–213 (RSN). 3 residues coordinate Mg(2+): Asp248, Glu260, and Asn262. Asp248, Glu260, and Asn262 together coordinate Mn(2+).

It belongs to the RimK family. Mg(2+) is required as a cofactor. It depends on Mn(2+) as a cofactor.

The polypeptide is Probable alpha-L-glutamate ligase 1 (Hahella chejuensis (strain KCTC 2396)).